Reading from the N-terminus, the 304-residue chain is Insulin-like growth factor 1 receptor (304 aa).

Fibronectin type-III domains are found at residues 1–43 (ERTV…TMPA) and 49–142 (IPGP…VQAK). At 1-147 (ERTVISNLRP…YVQAKTTYEN (147 aa)) the chain is on the extracellular side. N-linked (GlcNAc...) asparagine glycosylation is found at Asn115 and Asn128. Residues 148 to 168 (FIHLIIALPVAVLLIVGGLVI) traverse the membrane as a helical segment. Residues 169–304 (MLYVFHRKRN…HMNGGRKNER (136 aa)) lie on the Cytoplasmic side of the membrane. Ser225 is modified (phosphoserine; by GSK3-beta). Ser229 bears the Phosphoserine mark. A disordered region spans residues 231-304 (ENKPPEPEEL…HMNGGRKNER (74 aa)). Positions 237–246 (PEELDLEPEN) are enriched in acidic residues. Over residues 247–263 (MESVPLDPSASSSSLPL) the composition is skewed to low complexity. Basic and acidic residues predominate over residues 264–273 (PDRHSGHKAE).

This sequence belongs to the protein kinase superfamily. Tyr protein kinase family. Insulin receptor subfamily. In terms of assembly, tetramer of 2 alpha and 2 beta chains linked by disulfide bonds. The alpha chains contribute to the formation of the ligand-binding domain, while the beta chain carries the kinase domain. Forms a hybrid receptor with INSR, the hybrid is a tetramer consisting of 1 alpha chain and 1 beta chain of INSR and 1 alpha chain and 1 beta chain of IGF1R. Interacts with ARRB1 and ARRB2. Interacts with GRB10. Interacts with RACK1. Interacts with SOCS1, SOCS2 and SOCS3. Interacts with 14-3-3 proteins. Interacts with NMD2. Interacts with MAP3K5. Interacts with STAT3. Found in a ternary complex with IGF1 and ITGAV:ITGB3 or ITGA6:ITGB4. Interacts (nascent precursor form) with ZFAND2B. Autophosphorylated on tyrosine residues in response to ligand binding. Autophosphorylation occurs in trans, i.e. one subunit of the dimeric receptor phosphorylates tyrosine residues on the other subunit. Autophosphorylation occurs in a sequential manner. While every single phosphorylation increases kinase activity, all three tyrosine residues in the kinase activation loop have to be phosphorylated for optimal activity. Can be autophosphorylated at additional tyrosine residues (in vitro). May also be phosphorylated at tyrosine residues by mTORC2. Autophosphorylated is followed by phosphorylation of juxtamembrane tyrosines and C-terminal serines. Phosphorylation of Ser-225 by GSK-3beta restrains kinase activity and promotes cell surface expression, it requires a priming phosphorylation at Ser-229. Dephosphorylated by PTPN1. Post-translationally, polyubiquitinated in the activation loop through both 'Lys-48' and 'Lys-29' linkages, promoting receptor endocytosis and subsequent degradation by the proteasome. Ubiquitination is facilitated by pre-existing phosphorylation. In terms of processing, sumoylated with SUMO1. Controlled by regulated intramembrane proteolysis (RIP). Undergoes metalloprotease-dependent constitutive ectodomain shedding to produce a membrane-anchored 52 kDa C-Terminal fragment which is further processed by presenilin gamma-secretase to yield an intracellular 50 kDa fragment.

It is found in the cell membrane. It carries out the reaction L-tyrosyl-[protein] + ATP = O-phospho-L-tyrosyl-[protein] + ADP + H(+). Its activity is regulated as follows. Activated by autophosphorylation at tyrosines in the kinase activation loop; phosphorylation at all three tyrosine residues is required for optimal kinase activity. Inhibited by MSC1609119A-1, BMS-754807, PQIP, benzimidazole pyridinone, isoquinolinedione, bis-azaindole, 3-cyanoquinoline, 2,4-bis-arylamino-1,3-pyrimidine, pyrrolopyrimidine, pyrrole-5-carboxaldehyde, picropodophyllin (PPP), tyrphostin derivatives. While most inhibitors bind to the ATP binding pocket, MSC1609119A-1 functions as allosteric inhibitor and binds close to the DFG motif and the activation loop. Its function is as follows. Receptor tyrosine kinase which mediates actions of insulin-like growth factor 1 (IGF1). Binds IGF1 with high affinity and IGF2 and insulin (INS) with a lower affinity. The activated IGF1R is involved in cell growth and survival control. IGF1R is crucial for tumor transformation and survival of malignant cell. Ligand binding activates the receptor kinase, leading to receptor autophosphorylation, and tyrosines phosphorylation of multiple substrates, that function as signaling adapter proteins including, the insulin-receptor substrates (IRS1/2), Shc and 14-3-3 proteins. Phosphorylation of IRSs proteins lead to the activation of two main signaling pathways: the PI3K-AKT/PKB pathway and the Ras-MAPK pathway. The result of activating the MAPK pathway is increased cellular proliferation, whereas activating the PI3K pathway inhibits apoptosis and stimulates protein synthesis. Phosphorylated IRS1 can activate the 85 kDa regulatory subunit of PI3K (PIK3R1), leading to activation of several downstream substrates, including protein AKT/PKB. AKT phosphorylation, in turn, enhances protein synthesis through mTOR activation and triggers the antiapoptotic effects of IGFIR through phosphorylation and inactivation of BAD. In parallel to PI3K-driven signaling, recruitment of Grb2/SOS by phosphorylated IRS1 or Shc leads to recruitment of Ras and activation of the ras-MAPK pathway. In addition to these two main signaling pathways IGF1R signals also through the Janus kinase/signal transducer and activator of transcription pathway (JAK/STAT). Phosphorylation of JAK proteins can lead to phosphorylation/activation of signal transducers and activators of transcription (STAT) proteins. In particular activation of STAT3, may be essential for the transforming activity of IGF1R. The JAK/STAT pathway activates gene transcription and may be responsible for the transforming activity. JNK kinases can also be activated by the IGF1R. IGF1 exerts inhibiting activities on JNK activation via phosphorylation and inhibition of MAP3K5/ASK1, which is able to directly associate with the IGF1R. When present in a hybrid receptor with INSR, binds IGF1. The protein is Insulin-like growth factor 1 receptor (IGF1R) of Sus scrofa (Pig).